The chain runs to 336 residues: Calcium uniporter protein 3, mitochondrial (336 aa).

Residues 1-69 constitute a mitochondrion transit peptide; that stretch reads MAMRKLLSKK…RFMHNSAMIR (69 aa). A run of 2 helical transmembrane segments spans residues 231–251 and 257–277; these read LWAGLGYLILQTAGFMRLTFW and VMEPICFYVTSVYFMAGYAFF. A Selectivity filter motif is present at residues 255–263; it reads WDVMEPICF. Glutamate 259 is a binding site for Ca(2+).

This sequence belongs to the MCU (TC 1.A.77) family.

It localises to the mitochondrion inner membrane. The catalysed reaction is Ca(2+)(in) = Ca(2+)(out). In terms of biological role, mitochondrial inner membrane calcium uniporter that mediates calcium uptake into mitochondria. Constitutes a pore-forming and calcium-conducting subunit. Mitochondrial calcium homeostasis plays key roles in cellular physiology and regulates cell bioenergetics, cytoplasmic calcium signals and activation of cell death pathways. This chain is Calcium uniporter protein 3, mitochondrial, found in Arabidopsis thaliana (Mouse-ear cress).